Consider the following 368-residue polypeptide: Interferon-stimulated 20 kDa exonuclease-like 2 (368 aa).

Disordered regions lie at residues 33–107 and 127–187; these read FLEQ…APSK and PKTK…PTVP. A compositionally biased stretch (polar residues) spans 42-54; that stretch reads KKNQPPNKVSKLN. Basic and acidic residues predominate over residues 77–96; that stretch reads KKKEAAASKRDSERSKDKKA. A compositionally biased stretch (basic residues) spans 131-145; sequence STQKKGSKKKSLKKK. The 175-residue stretch at 194-368 folds into the Exonuclease domain; the sequence is MVAIDCEMVG…QHLAQNPPEN (175 aa).

It localises to the nucleus. The protein resides in the nucleolus. Its function is as follows. 3'-&gt; 5'-exoribonuclease involved in ribosome biogenesis in the processing of the 12S pre-rRNA. Displays a strong specificity for a 3'-end containing a free hydroxyl group. This is Interferon-stimulated 20 kDa exonuclease-like 2 (Isg20l2) from Mus musculus (Mouse).